A 642-amino-acid chain; its full sequence is Epithelial sodium channel subunit alpha (642 aa).

Over 1 to 81 (MHQVVTVKAE…VCSKRNKMKT (81 aa)) the chain is Cytoplasmic. The helical transmembrane segment at 82 to 102 (AFWSVLFFLTFGLMYWQFGIL) threads the bilayer. Residues 103–553 (YREYFSFPVN…NQWSLWFGSS (451 aa)) are Extracellular-facing. 10 cysteine pairs are disulfide-bonded: Cys-130/Cys-297, Cys-222/Cys-229, Cys-274/Cys-281, Cys-385/Cys-470, Cys-407/Cys-447, Cys-407/Cys-466, Cys-411/Cys-462, Cys-420/Cys-447, Cys-420/Cys-470, and Cys-422/Cys-436. Positions 170–209 (GAAQSSQKRSQRSLSHHVQRHPLRRRKRNEPVSLKGNSPP) are disordered. Residues 178–197 (RSQRSLSHHVQRHPLRRRKR) show a composition bias toward basic residues. A helical transmembrane segment spans residues 554 to 574 (VLSVVELAELILDFIAITIIL). Residues 575-642 (SFKRFRSRQV…RDGEAVIGLE (68 aa)) lie on the Cytoplasmic side of the membrane. The segment at 587–608 (PSVPPPGAHDNTAFQSEPADPS) is disordered.

It belongs to the amiloride-sensitive sodium channel (TC 1.A.6) family. SCNN1A subfamily. Heterotrimer; disulfide-linked and containing an alpha/SCNN1A, a beta/SCNN1B and a gamma/SCNN1G subunit.

The protein resides in the apical cell membrane. It is found in the cell projection. It localises to the cilium. Its subcellular location is the cytoplasmic granule. The protein localises to the cytoplasm. The protein resides in the cytoplasmic vesicle. It is found in the secretory vesicle. It localises to the acrosome. Its subcellular location is the flagellum. It carries out the reaction Na(+)(in) = Na(+)(out). Originally identified and characterized by its inhibition by the diuretic drug amiloride. This is one of the three pore-forming subunits of the heterotrimeric epithelial sodium channel (ENaC), a critical regulator of sodium balance and fluid homeostasis. ENaC operates in epithelial tissues, where it mediates the electrodiffusion of sodium ions from extracellular fluid through the apical membrane of cells, with water following osmotically. The protein is Epithelial sodium channel subunit alpha of Pelodiscus sinensis (Chinese softshell turtle).